A 269-amino-acid polypeptide reads, in one-letter code: Tryptophan synthase alpha chain (269 aa).

Catalysis depends on proton acceptor residues Glu-49 and Asp-60.

The protein belongs to the TrpA family. In terms of assembly, tetramer of two alpha and two beta chains.

The enzyme catalyses (1S,2R)-1-C-(indol-3-yl)glycerol 3-phosphate + L-serine = D-glyceraldehyde 3-phosphate + L-tryptophan + H2O. It functions in the pathway amino-acid biosynthesis; L-tryptophan biosynthesis; L-tryptophan from chorismate: step 5/5. Its function is as follows. The alpha subunit is responsible for the aldol cleavage of indoleglycerol phosphate to indole and glyceraldehyde 3-phosphate. This Stutzerimonas stutzeri (strain A1501) (Pseudomonas stutzeri) protein is Tryptophan synthase alpha chain.